The chain runs to 279 residues: Prephenate dehydratase (279 aa).

The Prephenate dehydratase domain occupies 2–178 (KIAYLGPRGS…NSTRFWLLGK (177 aa)). The region spanning 194 to 272 (LALTLPDNLP…VNVRLLGNYS (79 aa)) is the ACT domain.

The catalysed reaction is prephenate + H(+) = 3-phenylpyruvate + CO2 + H2O. It participates in amino-acid biosynthesis; L-phenylalanine biosynthesis; phenylpyruvate from prephenate: step 1/1. The sequence is that of Prephenate dehydratase (pheA) from Lactococcus lactis subsp. cremoris (strain MG1363).